A 165-amino-acid polypeptide reads, in one-letter code: MNKTEFYADLNRDFNALMAGETSFLATLANTSALLYERLTDINWAGFYLLEDDTLVLGPFQGKIACVRIPVGRGVCGTAVARNQVQRIEDVHVFDGHIACDAASNSEIVLPLVVKNQIIGVLDIDSTVFGRFTDEDEQGLRQLVAQLEKVLATTDYKKFFASVAG.

One can recognise a GAF domain in the interval 49–149 (LLEDDTLVLG…LRQLVAQLEK (101 aa)).

The protein belongs to the free Met sulfoxide reductase family.

It catalyses the reaction [thioredoxin]-disulfide + L-methionine + H2O = L-methionine (R)-S-oxide + [thioredoxin]-dithiol. Functionally, catalyzes the reversible oxidation-reduction of the R-enantiomer of free methionine sulfoxide to methionine. Specific for free L-methionine-(R)-S-oxide. This Escherichia coli (strain K12) protein is Free methionine-R-sulfoxide reductase (msrC).